The sequence spans 534 residues: Potential RNA-dependent RNA polymerase (534 aa).

Positions 255–373 constitute a RdRp catalytic domain; sequence DVVVCTDFSK…TYPGISAEDV (119 aa).

It localises to the virion. It catalyses the reaction RNA(n) + a ribonucleoside 5'-triphosphate = RNA(n+1) + diphosphate. In terms of biological role, RNA-directed RNA polymerase that is involved in both transcription and genome replication. This chain is Potential RNA-dependent RNA polymerase (Segment-2), found in Human picobirnavirus (strain Human/Thailand/Hy005102/-) (PBV).